The sequence spans 477 residues: uncharacterized protein (477 aa).

An N-terminal signal peptide occupies residues 1–18 (MWTALVLVWISSVPLSRS). Residues 19-427 (HTVPAVPRHL…DPLTPSLVNK (409 aa)) lie on the Extracellular side of the membrane. N-linked (GlcNAc...) asparagine glycosylation is found at Asn-40, Asn-51, and Asn-77. Disordered stretches follow at residues 79–103 (TRVT…GTAD), 239–366 (GTIN…TGGP), and 378–398 (KATA…DVKV). A compositionally biased stretch (low complexity) spans 85 to 97 (TTPHGTNTSTPTT). Polar residues-rich tracts occupy residues 253–288 (PAKS…QPVH) and 298–309 (PSNTTLEPNTPK). N-linked (GlcNAc...) asparagine glycosylation is present at Asn-300. Composition is skewed to low complexity over residues 310–326 (SVAS…QVQT), 348–361 (TSPT…LPTQ), and 378–393 (KATA…SRSS). Residues 428 to 448 (MFLLVVLIVGVTLFIAVLMMF) traverse the membrane as a helical segment. At 449–477 (ALQAYESYKKKDYTQVDYLINGMYADSEM) the chain is on the cytoplasmic side.

The protein resides in the cell membrane. It is found in the golgi apparatus. Its subcellular location is the trans-Golgi network membrane. This is an uncharacterized protein from Rattus norvegicus (Rat).